Consider the following 309-residue polypeptide: S-antigen protein (309 aa).

Residues 1–23 (MNRILSVSFYLFFLYLYIYKTYG) form the signal peptide. Residues 52 to 309 (GKGNKYEDLQ…KSIMNMLILM (258 aa)) are disordered. A compositionally biased stretch (acidic residues) spans 60 to 86 (LQEEGEGENDDEEHSNSEESDNDEENE). The span at 93–259 (EAPKSDEAEA…DEAEARKSEA (167 aa)) shows a compositional bias: basic and acidic residues. The tract at residues 97 to 256 (SDEAEALKSD…RKSDEAEARK (160 aa)) is 20 X 8 AA approximate tandem repeats of A-[RL]-K-S-D-E-A-E. 2 consecutive repeat copies span residues 257–271 (SEAGTEGPKGTGGPG) and 272–286 (SEAGTEGPKGTGGPG). The tract at residues 257-286 (SEAGTEGPKGTGGPGSEAGTEGPKGTGGPG) is 2 X 15 AA tandem repeats of S-E-A-G-T-E-G-P-K-G-T-G-G-P-G. Residues 263 to 289 (GPKGTGGPGSEAGTEGPKGTGGPGSGG) are compositionally biased toward gly residues.

Its subcellular location is the parasitophorous vacuole. In terms of biological role, s antigens are soluble heat-stable proteins present in the sera of some infected individuals. This is S-antigen protein from Plasmodium falciparum (isolate NF7 / Ghana).